The following is a 362-amino-acid chain: MSKNIVLLPGDHVGPEVVAEAVKVLEAVSSAIGVKFNFSKHLIGGASIDAYGVPLSDEALEAAKKADAVLLGAVGGPKWGTGSVRPEQGLLKIRKELNLYANLRPCSFASDALLKLSPLKSEIVKGTDFVVVRELVGGIYFGDRKEDAGDGVASDTESYSVPEVQRITRMAAFLALQSDPPLPLWSLDKANVLASSRLWRKTVEETIKNEFPQLTVQHQLIDSAAMILVKSPTKLNGVIVTNNMFGDIISDEASVIPGSLGLLPSASLASLPDTNKAFGLYEPCHGSAPDLGPGKVNPLATILSAAMMLKLSLDLVDAGRAIEQAVKNVLDAGIMTADLGGSSSTQEVGDAVAQEVAKLLKN.

76-87 is a binding site for NAD(+); the sequence is GPKWGTGSVRPE. Substrate-binding residues include arginine 94, arginine 104, arginine 133, and aspartate 222. Positions 222, 247, and 251 each coordinate Mg(2+). Residue 286–297 participates in NAD(+) binding; that stretch reads GSAPDLGPGKVN.

The protein belongs to the isocitrate and isopropylmalate dehydrogenases family. As to quaternary structure, homodimer. Mg(2+) is required as a cofactor. Mn(2+) serves as cofactor.

The protein localises to the cytoplasm. It catalyses the reaction (2R,3S)-3-isopropylmalate + NAD(+) = 4-methyl-2-oxopentanoate + CO2 + NADH. The protein operates within amino-acid biosynthesis; L-leucine biosynthesis; L-leucine from 3-methyl-2-oxobutanoate: step 3/4. Catalyzes the oxidation of 3-carboxy-2-hydroxy-4-methylpentanoate (3-isopropylmalate) to 3-carboxy-4-methyl-2-oxopentanoate. The product decarboxylates to 4-methyl-2 oxopentanoate. The polypeptide is 3-isopropylmalate dehydrogenase (LEU2) (Pichia angusta (Yeast)).